Reading from the N-terminus, the 499-residue chain is MNFFIKSCFLDKEKTDCIVVSVFELSELSDSAIYLDKCSNGHITSLIKLGDIQGKIGDTLMLYKVPKILSKRILLVGCGKKDEINIIRFKKILKNTIHAIKKKSIKNIVYSFSNINIDNIYWMIRRMVLSLKESLYETIKINNTNIKNTNIHSITLNIIKKNDLFIAKTALKHALAIDHAITSTKNLSNLPPNICNPLYLSYKAQELSKKYENNIVVEIIDIKKMKELGMNAYIAVGNGSKNKPFMSVIKYSGNNIVNKKIIAFVGKGLTFDSGGISIKPALHMHEMKYDMCGAAAVYGTLIMAAELQLPLTVIGILSGCENMVGSHSFRPGDVLTTMSGQTVEILNTDAEGRLVLCDSLTYLERFSPDIVIDVATLTGACVTALGESVSGLFSNNEELSNQLLHASQETDDKIWSLPLFSEYHKELNSDIADFSNIGRGKAGAITAACFLSKFTKKYNWAHLDIAGTAWKSGKKSGATGRPVELLCQFLLNQSNYIYN.

Mn(2+) contacts are provided by Lys-267 and Asp-272. Residue Lys-279 is part of the active site. Residues Asp-290, Asp-349, and Glu-351 each coordinate Mn(2+). The active site involves Arg-353.

It belongs to the peptidase M17 family. Mn(2+) is required as a cofactor.

It localises to the cytoplasm. It catalyses the reaction Release of an N-terminal amino acid, Xaa-|-Yaa-, in which Xaa is preferably Leu, but may be other amino acids including Pro although not Arg or Lys, and Yaa may be Pro. Amino acid amides and methyl esters are also readily hydrolyzed, but rates on arylamides are exceedingly low.. The catalysed reaction is Release of an N-terminal amino acid, preferentially leucine, but not glutamic or aspartic acids.. In terms of biological role, presumably involved in the processing and regular turnover of intracellular proteins. Catalyzes the removal of unsubstituted N-terminal amino acids from various peptides. The sequence is that of Probable cytosol aminopeptidase from Buchnera aphidicola subsp. Acyrthosiphon pisum (strain 5A).